Consider the following 231-residue polypeptide: Biosynthetic peptidoglycan transglycosylase (231 aa).

A helical membrane pass occupies residues 12 to 32; that stretch reads LLAAFALLLLWQVWLFAQVAW.

This sequence belongs to the glycosyltransferase 51 family.

The protein resides in the cell inner membrane. The catalysed reaction is [GlcNAc-(1-&gt;4)-Mur2Ac(oyl-L-Ala-gamma-D-Glu-L-Lys-D-Ala-D-Ala)](n)-di-trans,octa-cis-undecaprenyl diphosphate + beta-D-GlcNAc-(1-&gt;4)-Mur2Ac(oyl-L-Ala-gamma-D-Glu-L-Lys-D-Ala-D-Ala)-di-trans,octa-cis-undecaprenyl diphosphate = [GlcNAc-(1-&gt;4)-Mur2Ac(oyl-L-Ala-gamma-D-Glu-L-Lys-D-Ala-D-Ala)](n+1)-di-trans,octa-cis-undecaprenyl diphosphate + di-trans,octa-cis-undecaprenyl diphosphate + H(+). It participates in cell wall biogenesis; peptidoglycan biosynthesis. Peptidoglycan polymerase that catalyzes glycan chain elongation from lipid-linked precursors. This chain is Biosynthetic peptidoglycan transglycosylase, found in Azoarcus sp. (strain BH72).